Reading from the N-terminus, the 118-residue chain is MARIAGVNIPDNKHTVISLTYIYGVGRTTAQKICADAGVNPAAKIKDLSDEQIETLRGEVAKFTTEGDLRRDINMKIKRLMDLGCYRGLRHRKGLPVRGQRTKTNARTRKGPRKPIRK.

The interval 92 to 118 (RKGLPVRGQRTKTNARTRKGPRKPIRK) is disordered.

It belongs to the universal ribosomal protein uS13 family. In terms of assembly, part of the 30S ribosomal subunit. Forms a loose heterodimer with protein S19. Forms two bridges to the 50S subunit in the 70S ribosome.

Its function is as follows. Located at the top of the head of the 30S subunit, it contacts several helices of the 16S rRNA. In the 70S ribosome it contacts the 23S rRNA (bridge B1a) and protein L5 of the 50S subunit (bridge B1b), connecting the 2 subunits; these bridges are implicated in subunit movement. Contacts the tRNAs in the A and P-sites. The chain is Small ribosomal subunit protein uS13 from Pseudomonas putida (strain ATCC 700007 / DSM 6899 / JCM 31910 / BCRC 17059 / LMG 24140 / F1).